The following is a 120-amino-acid chain: MASRKEALARRANRVRRHLKSVANGRPRLSVHRSSKNIYAQVIDDVAGKTLAAASTLDKDLRGSLKTGADTAAAALVGKLVAERASKAGVTDVVFDRGAFIYHGRIKALADAAREGGLTF.

Belongs to the universal ribosomal protein uL18 family. Part of the 50S ribosomal subunit; part of the 5S rRNA/L5/L18/L25 subcomplex. Contacts the 5S and 23S rRNAs.

Functionally, this is one of the proteins that bind and probably mediate the attachment of the 5S RNA into the large ribosomal subunit, where it forms part of the central protuberance. The protein is Large ribosomal subunit protein uL18 of Rhizobium leguminosarum bv. trifolii (strain WSM2304).